The sequence spans 205 residues: Adenylyl-sulfate kinase (205 aa).

Residue 31–38 (GLSGAGKS) participates in ATP binding. The active-site Phosphoserine intermediate is Ser105.

Belongs to the APS kinase family.

The catalysed reaction is adenosine 5'-phosphosulfate + ATP = 3'-phosphoadenylyl sulfate + ADP + H(+). It participates in sulfur metabolism; hydrogen sulfide biosynthesis; sulfite from sulfate: step 2/3. Catalyzes the synthesis of activated sulfate. The chain is Adenylyl-sulfate kinase from Shewanella baltica (strain OS155 / ATCC BAA-1091).